The chain runs to 411 residues: Serine hydroxymethyltransferase (411 aa).

(6S)-5,6,7,8-tetrahydrofolate contacts are provided by residues leucine 113 and glycine 117–leucine 119. Lysine 222 carries the N6-(pyridoxal phosphate)lysine modification. Residues glutamate 238 and serine 346–phenylalanine 348 each bind (6S)-5,6,7,8-tetrahydrofolate.

Belongs to the SHMT family. In terms of assembly, homodimer. Pyridoxal 5'-phosphate serves as cofactor.

The protein resides in the cytoplasm. The catalysed reaction is (6R)-5,10-methylene-5,6,7,8-tetrahydrofolate + glycine + H2O = (6S)-5,6,7,8-tetrahydrofolate + L-serine. The protein operates within one-carbon metabolism; tetrahydrofolate interconversion. It participates in amino-acid biosynthesis; glycine biosynthesis; glycine from L-serine: step 1/1. Catalyzes the reversible interconversion of serine and glycine with tetrahydrofolate (THF) serving as the one-carbon carrier. This reaction serves as the major source of one-carbon groups required for the biosynthesis of purines, thymidylate, methionine, and other important biomolecules. Also exhibits THF-independent aldolase activity toward beta-hydroxyamino acids, producing glycine and aldehydes, via a retro-aldol mechanism. This Prochlorococcus marinus (strain NATL1A) protein is Serine hydroxymethyltransferase.